Here is a 436-residue protein sequence, read N- to C-terminus: Trigger factor (436 aa).

Residues 163-248 form the PPIase FKBP-type domain; the sequence is TDRVIIDFAG…VKNVAEAILP (86 aa).

It belongs to the FKBP-type PPIase family. Tig subfamily.

It localises to the cytoplasm. The catalysed reaction is [protein]-peptidylproline (omega=180) = [protein]-peptidylproline (omega=0). In terms of biological role, involved in protein export. Acts as a chaperone by maintaining the newly synthesized protein in an open conformation. Functions as a peptidyl-prolyl cis-trans isomerase. This is Trigger factor from Laribacter hongkongensis (strain HLHK9).